A 231-amino-acid polypeptide reads, in one-letter code: MKRGKKYQESVKLVDKTKLYDPVEAMELVQKTAKAKFDETVEAHIRLGVDSRHADQQVRGAVVLPHGTGKKVRVLVFAKGEKATEAEKAGADYVGAEELVSKIQNENWFEFDVVVATPDMMGVVGRLGKVLGPKGLMPNPKAGTVTMDVAKAIADIKAGKIEYRLDKTNIIHCPIGKVSFGTEKLVDNFRTLMSAIIKAKPAAAKGQYLKSVVVTSTMGPGIKVNPLRVSE.

It belongs to the universal ribosomal protein uL1 family. As to quaternary structure, part of the 50S ribosomal subunit.

Functionally, binds directly to 23S rRNA. The L1 stalk is quite mobile in the ribosome, and is involved in E site tRNA release. Protein L1 is also a translational repressor protein, it controls the translation of the L11 operon by binding to its mRNA. This is Large ribosomal subunit protein uL1 from Acetivibrio thermocellus (strain ATCC 27405 / DSM 1237 / JCM 9322 / NBRC 103400 / NCIMB 10682 / NRRL B-4536 / VPI 7372) (Clostridium thermocellum).